Consider the following 297-residue polypeptide: ER membrane protein complex subunit 2 (297 aa).

At A2 the chain carries N-acetylalanine. TPR repeat units follow at residues 87–120, 155–188, and 192–225; these read HRVK…DPTN, QEAW…NPHN, and CQQY…NNRN. At K255 the chain carries N6-acetyllysine.

The protein belongs to the EMC2 family. Component of the ER membrane protein complex (EMC). Interacts with WNK1 (via amphipathic alpha-helix region); promoting the ER membrane protein complex assembly by preventing EMC2 ubiquitination. Post-translationally, ubiquitinated when soluble in the cytoplasm, leading to its degradation by the proteasome. Interaction with EMC2 prevents its ubiquitination and degradation.

The protein localises to the endoplasmic reticulum membrane. Its function is as follows. Part of the endoplasmic reticulum membrane protein complex (EMC) that enables the energy-independent insertion into endoplasmic reticulum membranes of newly synthesized membrane proteins. Preferentially accommodates proteins with transmembrane domains that are weakly hydrophobic or contain destabilizing features such as charged and aromatic residues. Involved in the cotranslational insertion of multi-pass membrane proteins in which stop-transfer membrane-anchor sequences become ER membrane spanning helices. It is also required for the post-translational insertion of tail-anchored/TA proteins in endoplasmic reticulum membranes. By mediating the proper cotranslational insertion of N-terminal transmembrane domains in an N-exo topology, with translocated N-terminus in the lumen of the ER, controls the topology of multi-pass membrane proteins like the G protein-coupled receptors. By regulating the insertion of various proteins in membranes, it is indirectly involved in many cellular processes. In Homo sapiens (Human), this protein is ER membrane protein complex subunit 2.